Here is a 528-residue protein sequence, read N- to C-terminus: Galactokinase (528 aa).

4 residues coordinate alpha-D-galactose: Arg-53, Glu-59, His-60, and Asp-62. Gly-165, Gly-167, Ser-169, and Ser-170 together coordinate ATP. Asn-213 and Asp-217 together coordinate alpha-D-galactose. Asp-217 functions as the Proton acceptor in the catalytic mechanism. ATP contacts are provided by Ser-264, Asn-265, and Lys-266. Residue Tyr-274 participates in alpha-D-galactose binding. Phosphoserine is present on Ser-381.

Belongs to the GHMP kinase family. GalK subfamily.

The catalysed reaction is alpha-D-galactose + ATP = alpha-D-galactose 1-phosphate + ADP + H(+). It participates in carbohydrate metabolism; galactose metabolism. Galactokinase is a key enzyme in the galactose metabolism where it catalyzes the conversion of alpha-D-galactose to galactose 1-phosphate. Can also induce the transcription of the yeast GAL genes in response to the organism being challenged with galactose as the sole source of carbon. It's striking amino acid sequence similarity to GAL3 might explain its GAL3-like induction activity. This Saccharomyces cerevisiae (strain ATCC 204508 / S288c) (Baker's yeast) protein is Galactokinase.